We begin with the raw amino-acid sequence, 859 residues long: Tripartite terminase subunit 1 (859 aa).

The C3H1-type zinc finger occupies 231–259 (CCICLDELSVTANQGDTIYKRLGYSVCDH). Basic and acidic residues predominate over residues 512–525 (TRPRADKAGGRAED). The segment at 512–542 (TRPRADKAGGRAEDGAGDCDDEGYPGAADAT) is disordered. An ATP-binding site is contributed by 782 to 789 (FESIFQCG).

It belongs to the herpesviridae TRM1 protein family. In terms of assembly, associates with TRM2 and TRM3 to form the tripartite terminase complex. Interacts with portal protein.

The protein localises to the host nucleus. Component of the molecular motor that translocates viral genomic DNA in empty capsid during DNA packaging. Forms a tripartite terminase complex together with TRM2 and TRM3 in the host cytoplasm. Once the complex reaches the host nucleus, it interacts with the capsid portal vertex. This portal forms a ring in which genomic DNA is translocated into the capsid. TRM1 carries an endonuclease activity that plays an important role for the cleavage of concatemeric viral DNA into unit length genomes. The chain is Tripartite terminase subunit 1 from Amazona oratrix (yellow-headed parrot).